The sequence spans 129 residues: Protein UL131A (129 aa).

Positions 1-18 (MRLCRVWLSVCLCAVVLG) are cleaved as a signal peptide.

Forms the envelope pentamer complex (PC) composed of gH, gL, UL128, UL130, and UL131A. The pentamer interacts with host NRP2. The interaction with gH is important for the formation of UL128, UL130, gH-gL complex.

It localises to the virion membrane. Functionally, plays a role in viral entry into host cells. Forms a pentameric complex at the surface of the viral envelope together with gH, gL, UL130 and UL131. This complex is required for entry in epithelial, endothelial and myeloid host cells. Mechanistically, engages host receptor(s) including neurophilin 2/NRP2 to mediate infection. Contributes to the formation of the complex between UL128, UL130 and gH-gL. The chain is Protein UL131A (UL131A) from Human cytomegalovirus (strain Merlin) (HHV-5).